The primary structure comprises 1845 residues: Helicase swr-1 (1845 aa).

A compositionally biased stretch (polar residues) spans methionine 1 to aspartate 13. The segment at methionine 1 to lysine 329 is disordered. Low complexity predominate over residues asparagine 24–aspartate 38. The span at serine 63–asparagine 84 shows a compositional bias: polar residues. Low complexity predominate over residues serine 98–serine 108. Positions proline 168–alanine 180 are enriched in basic and acidic residues. A compositionally biased stretch (polar residues) spans alanine 216–lysine 243. 2 stretches are compositionally biased toward pro residues: residues lysine 248 to alanine 258 and proline 283 to proline 292. Residues proline 418 to arginine 493 enclose the HSA domain. Disordered regions lie at residues glutamine 539–glycine 713 and glutamate 749–threonine 935. Residues aspartate 549–leucine 565 show a composition bias toward acidic residues. Over residues glycine 574 to glutamine 585 the composition is skewed to basic and acidic residues. Composition is skewed to acidic residues over residues glycine 586–aspartate 608 and asparagine 663–proline 704. Polar residues-rich tracts occupy residues threonine 762 to glutamate 777 and threonine 815 to leucine 834. Positions serine 888–threonine 897 are enriched in low complexity. Basic and acidic residues predominate over residues threonine 898–histidine 909. Over residues arginine 922–valine 933 the composition is skewed to polar residues. The Helicase ATP-binding domain maps to alanine 957 to proline 1122. Aspartate 970–threonine 977 lines the ATP pocket. The DEAH box motif lies at aspartate 1073–histidine 1076. The Helicase C-terminal domain maps to alanine 1510–threonine 1660. Disordered stretches follow at residues threonine 1702 to arginine 1724, glutamine 1751 to glutamate 1783, and leucine 1816 to arginine 1845. Residues glycine 1704–alanine 1718 are compositionally biased toward gly residues. Residues aspartate 1769–glycine 1781 are compositionally biased toward low complexity. Residues aspartate 1826–arginine 1845 show a composition bias toward basic residues.

It belongs to the SNF2/RAD54 helicase family. SWR1 subfamily. Component of the SWR1 chromatin-remodeling complex.

It localises to the nucleus. The enzyme catalyses ATP + H2O = ADP + phosphate + H(+). In terms of biological role, catalytic component of the SWR1 complex which mediates the ATP-dependent exchange of histone H2A for the H2A variant H2A.Z leading to transcriptional regulation of selected genes by chromatin remodeling. This chain is Helicase swr-1 (crf1-1), found in Neurospora crassa (strain ATCC 24698 / 74-OR23-1A / CBS 708.71 / DSM 1257 / FGSC 987).